We begin with the raw amino-acid sequence, 272 residues long: Phosphate import ATP-binding protein PstB (272 aa).

The region spanning 26–267 (IVVKNWNLYY…PQVKRTEDYI (242 aa)) is the ABC transporter domain. 58–65 (GPSGCGKS) is an ATP binding site.

Belongs to the ABC transporter superfamily. Phosphate importer (TC 3.A.1.7) family. In terms of assembly, the complex is composed of two ATP-binding proteins (PstB), two transmembrane proteins (PstC and PstA) and a solute-binding protein (PstS).

Its subcellular location is the cell inner membrane. The catalysed reaction is phosphate(out) + ATP + H2O = ADP + 2 phosphate(in) + H(+). Its function is as follows. Part of the ABC transporter complex PstSACB involved in phosphate import. Responsible for energy coupling to the transport system. The polypeptide is Phosphate import ATP-binding protein PstB (Hydrogenovibrio crunogenus (strain DSM 25203 / XCL-2) (Thiomicrospira crunogena)).